We begin with the raw amino-acid sequence, 180 residues long: Inorganic pyrophosphatase (180 aa).

Residues Lys-28, Arg-42, and Tyr-54 each contribute to the substrate site. Asp-66, Asp-71, and Asp-102 together coordinate Mg(2+). Tyr-139 is a substrate binding site.

Belongs to the PPase family. In terms of assembly, homohexamer. Mg(2+) serves as cofactor.

The protein resides in the cytoplasm. It catalyses the reaction diphosphate + H2O = 2 phosphate + H(+). In terms of biological role, hydrolyzes PPi generated in anabolic reactions. Functionally, catalyzes the hydrolysis of inorganic pyrophosphate (PPi) forming two phosphate ions. In Pseudanabaena sp. (strain PCC 6903), this protein is Inorganic pyrophosphatase.